Reading from the N-terminus, the 117-residue chain is MDTETSPLLSHNLSTREGIKQSTQGLLAHTIAKYPGTTAILLGILILLVIILIIVAIVYYNRAVDCNSNMPKPPPSYYVQQPEPHHHFPVFFRRRKNSTSQQSHIPSDEQLAELAHS.

The N-linked (GlcNAc...) asparagine; by host glycan is linked to Asn-12. Residues Ala-39–Tyr-59 traverse the membrane as a helical segment. Positions Lys-96–Ser-117 are disordered. Residue Asn-97 is glycosylated (N-linked (GlcNAc...) asparagine; by host).

Belongs to the asfivirus minor capsid protein p17 family. As to quaternary structure, interacts with the minor capsid protein M1249L and with the hexon capsid protein p72 capsomers; these interactions form a rigid zipper structure that stabilizes the capsomers. Interacts with host STING1.

The protein resides in the virion membrane. The protein localises to the host endoplasmic reticulum membrane. In terms of biological role, together with the penton and the other minor capsid proteins (M1249L, p49), forms a complicated network immediately below the outer capsid shell, stabilizing the whole capsid. Three copies of p17 encircle each p72 capsomer in the inner capsid shell, anchoring p72 capsomers on the inner membrane. Required for the assembly of the capsid and icosahedral morphogenesis. Additionally, inhibits the host cGAS-STING pathway through its interaction with STING1 and subsequent interference of the recruitment of downstream components TBK1 and IKBKE. The sequence is that of Minor capsid protein p17 from African swine fever virus (isolate Tick/South Africa/Pretoriuskop Pr4/1996) (ASFV).